The following is a 256-amino-acid chain: Thiazole synthase (256 aa).

The Schiff-base intermediate with DXP role is filled by K95. Residues G156, 182-183, and 204-205 each bind 1-deoxy-D-xylulose 5-phosphate; these read AG and NT.

It belongs to the ThiG family. As to quaternary structure, homotetramer. Forms heterodimers with either ThiH or ThiS.

Its subcellular location is the cytoplasm. It carries out the reaction [ThiS sulfur-carrier protein]-C-terminal-Gly-aminoethanethioate + 2-iminoacetate + 1-deoxy-D-xylulose 5-phosphate = [ThiS sulfur-carrier protein]-C-terminal Gly-Gly + 2-[(2R,5Z)-2-carboxy-4-methylthiazol-5(2H)-ylidene]ethyl phosphate + 2 H2O + H(+). It participates in cofactor biosynthesis; thiamine diphosphate biosynthesis. Functionally, catalyzes the rearrangement of 1-deoxy-D-xylulose 5-phosphate (DXP) to produce the thiazole phosphate moiety of thiamine. Sulfur is provided by the thiocarboxylate moiety of the carrier protein ThiS. In vitro, sulfur can be provided by H(2)S. The polypeptide is Thiazole synthase (Klebsiella pneumoniae subsp. pneumoniae (strain ATCC 700721 / MGH 78578)).